The sequence spans 222 residues: Small ribosomal subunit protein uS3 (222 aa).

In terms of domain architecture, KH type-2 spans 39 to 108 (IRRHIKEKLY…TISLDIKEIK (70 aa)).

It belongs to the universal ribosomal protein uS3 family. As to quaternary structure, part of the 30S ribosomal subunit. Forms a tight complex with proteins S10 and S14.

In terms of biological role, binds the lower part of the 30S subunit head. Binds mRNA in the 70S ribosome, positioning it for translation. This is Small ribosomal subunit protein uS3 from Caldicellulosiruptor saccharolyticus (strain ATCC 43494 / DSM 8903 / Tp8T 6331).